A 614-amino-acid polypeptide reads, in one-letter code: 1-deoxy-D-xylulose-5-phosphate synthase (614 aa).

Thiamine diphosphate is bound by residues His74 and 115-117; that span reads GHS. Residue Asp146 coordinates Mg(2+). Thiamine diphosphate contacts are provided by residues 147–148, Asn175, Tyr282, and Glu363; that span reads GA. Asn175 contributes to the Mg(2+) binding site.

Belongs to the transketolase family. DXPS subfamily. Homodimer. It depends on Mg(2+) as a cofactor. Requires thiamine diphosphate as cofactor.

The catalysed reaction is D-glyceraldehyde 3-phosphate + pyruvate + H(+) = 1-deoxy-D-xylulose 5-phosphate + CO2. Its pathway is metabolic intermediate biosynthesis; 1-deoxy-D-xylulose 5-phosphate biosynthesis; 1-deoxy-D-xylulose 5-phosphate from D-glyceraldehyde 3-phosphate and pyruvate: step 1/1. Catalyzes the acyloin condensation reaction between C atoms 2 and 3 of pyruvate and glyceraldehyde 3-phosphate to yield 1-deoxy-D-xylulose-5-phosphate (DXP). The chain is 1-deoxy-D-xylulose-5-phosphate synthase from Methylobacillus flagellatus (strain ATCC 51484 / DSM 6875 / VKM B-1610 / KT).